Reading from the N-terminus, the 455-residue chain is Phosphoglucosamine mutase (455 aa).

Catalysis depends on S108, which acts as the Phosphoserine intermediate. Residues S108, D246, D248, and D250 each contribute to the Mg(2+) site. At S108 the chain carries Phosphoserine.

The protein belongs to the phosphohexose mutase family. Mg(2+) is required as a cofactor. Post-translationally, activated by phosphorylation.

It catalyses the reaction alpha-D-glucosamine 1-phosphate = D-glucosamine 6-phosphate. Its function is as follows. Catalyzes the conversion of glucosamine-6-phosphate to glucosamine-1-phosphate. The chain is Phosphoglucosamine mutase from Frankia casuarinae (strain DSM 45818 / CECT 9043 / HFP020203 / CcI3).